We begin with the raw amino-acid sequence, 1001 residues long: Phosphatidylinositol 4,5-bisphosphate 5-phosphatase A (1001 aa).

The span at 1–12 (MEGQSRSGSAKS) shows a compositional bias: polar residues. Disordered regions lie at residues 1–130 (MEGQ…VASV) and 144–412 (SASA…QPTC). The RSXSXX motif 1 motif lies at 6-11 (RSGSAK). Positions 13-28 (GTRTGLGPLPGTHGAL) are enriched in low complexity. Over residues 29–42 (QTGTPSKKVNSSFQ) the composition is skewed to polar residues. Position 56 is an asymmetric dimethylarginine; alternate (Arg-56). Residue Arg-56 is modified to Omega-N-methylarginine; alternate. At Arg-65 the chain carries Omega-N-methylarginine. Arg-76 carries the asymmetric dimethylarginine modification. Arg-83 carries the asymmetric dimethylarginine; alternate modification. Arg-83 bears the Omega-N-methylarginine; alternate mark. The segment covering 161 to 174 (SPTSRDQKQLSPTS) has biased composition (polar residues). Ser-171 is subject to Phosphoserine. Over residues 180 to 196 (ALATSGLSLALASQEQP) the composition is skewed to low complexity. A compositionally biased stretch (pro residues) spans 197-210 (PQSPSSPSPVPSPV). The span at 284–294 (ARPEAPRHSPE) shows a compositional bias: basic and acidic residues. Ser-292 and Ser-325 each carry phosphoserine. Pro residues predominate over residues 338-348 (VPPPLPKPPRS). An SH3-binding motif is present at residues 346 to 351 (PRSPSR). Composition is skewed to low complexity over residues 349–361 (PSRS…NRSP) and 394–411 (SPVA…AQPT). Residues 351-356 (RSPSRS) carry the RSXSXX motif 2 motif. The catalytic stretch occupies residues 420 to 723 (ITVVTWNVGT…SDHKPVAARF (304 aa)). The interval 724–835 (LLQFAFRDDV…IGVTEPFQIS (112 aa)) is required for ruffle localization. The interval 837 to 1001 (PTSESASSST…LGLEDGGLGP (165 aa)) is disordered. A compositionally biased stretch (low complexity) spans 838 to 853 (TSESASSSTDSSGTSS). Short sequence motifs (RSXSXX motif) lie at residues 869-874 (RSPSPG) and 880-885 (RSRSPG). Ser-898 carries the phosphoserine modification. Low complexity-rich tracts occupy residues 905-917 (SRSP…QLPR) and 925-936 (SSGSRGSSEEGP). The short motif at 906-911 (RSPSPQ) is the RSXSXX motif 5 element. Residues 937–949 (SGPPGPWAFPPAV) are compositionally biased toward pro residues. Ser-985 is subject to Phosphoserine.

This sequence belongs to the inositol 1,4,5-trisphosphate 5-phosphatase type II family. Post-translationally, phosphorylated on Ser/Thr residues. Expressed in heart, brain, kidney, stomach, small intestine and lung. Not expressed in spleen, thymus, skeletal muscle, testis and skin.

Its subcellular location is the cytoplasm. It carries out the reaction 1D-myo-inositol 1,4,5-trisphosphate + H2O = 1D-myo-inositol 1,4-bisphosphate + phosphate. The catalysed reaction is 1D-myo-inositol 1,3,4,5-tetrakisphosphate + H2O = 1D-myo-inositol 1,3,4-trisphosphate + phosphate. It catalyses the reaction a 1,2-diacyl-sn-glycero-3-phospho-(1D-myo-inositol-4,5-bisphosphate) + H2O = a 1,2-diacyl-sn-glycero-3-phospho-(1D-myo-inositol 4-phosphate) + phosphate. Inositol 5-phosphatase, which converts inositol 1,4,5-trisphosphate to inositol 1,4-bisphosphate. Also converts phosphatidylinositol 4,5-bisphosphate to phosphatidylinositol 4-phosphate and inositol 1,3,4,5-tetrakisphosphate to inositol 1,3,4-trisphosphate in vitro. May be involved in modulation of the function of inositol and phosphatidylinositol polyphosphate-binding proteins that are present at membranes ruffles. In Rattus norvegicus (Rat), this protein is Phosphatidylinositol 4,5-bisphosphate 5-phosphatase A (Inpp5j).